The chain runs to 171 residues: 6,7-dimethyl-8-ribityllumazine synthase (171 aa).

5-amino-6-(D-ribitylamino)uracil is bound by residues phenylalanine 24, 58-60 (ALE), and 82-84 (AVI). Position 87–88 (87–88 (ET)) interacts with (2S)-2-hydroxy-3-oxobutyl phosphate. The Proton donor role is filled by histidine 90. Asparagine 115 contacts 5-amino-6-(D-ribitylamino)uracil. Arginine 129 is a binding site for (2S)-2-hydroxy-3-oxobutyl phosphate. A disordered region spans residues 150–171 (ALDQLGDDEDEEEDEEDEEERA). Residues 154 to 171 (LGDDEDEEEDEEDEEERA) are compositionally biased toward acidic residues.

It belongs to the DMRL synthase family.

It catalyses the reaction (2S)-2-hydroxy-3-oxobutyl phosphate + 5-amino-6-(D-ribitylamino)uracil = 6,7-dimethyl-8-(1-D-ribityl)lumazine + phosphate + 2 H2O + H(+). It functions in the pathway cofactor biosynthesis; riboflavin biosynthesis; riboflavin from 2-hydroxy-3-oxobutyl phosphate and 5-amino-6-(D-ribitylamino)uracil: step 1/2. In terms of biological role, catalyzes the formation of 6,7-dimethyl-8-ribityllumazine by condensation of 5-amino-6-(D-ribitylamino)uracil with 3,4-dihydroxy-2-butanone 4-phosphate. This is the penultimate step in the biosynthesis of riboflavin. In Burkholderia ambifaria (strain MC40-6), this protein is 6,7-dimethyl-8-ribityllumazine synthase.